The following is a 306-amino-acid chain: Palmitoyl-protein thioesterase 1 (306 aa).

Residues 1 to 27 form the signal peptide; it reads MASPSCLWLLAVALLPWTCAARALHHL. 3 disulfides stabilise this stretch: C45–C46, C96–C128, and C152–C160. S115 is a catalytic residue. N-linked (GlcNAc...) asparagine glycosylation is found at N197, N212, and N232. Catalysis depends on residues D233 and H289.

It belongs to the palmitoyl-protein thioesterase family. In terms of assembly, interacts with CLN5, ATP5F1A and ATP5F1B. In terms of processing, glycosylated.

Its subcellular location is the lysosome. The protein localises to the secreted. It localises to the golgi apparatus. It is found in the endoplasmic reticulum. It carries out the reaction S-hexadecanoyl-L-cysteinyl-[protein] + H2O = L-cysteinyl-[protein] + hexadecanoate + H(+). It catalyses the reaction hexadecanoyl-CoA + H2O = hexadecanoate + CoA + H(+). The enzyme catalyses S-hexadecanoyl-N-acetylcysteamine + H2O = N-acetylcysteamine + hexadecanoate + H(+). The catalysed reaction is S-hexadecanoyl-N-acetylcysteine methyl ester + H2O = N-acetylcysteine methyl ester + hexadecanoate + H(+). Its activity is regulated as follows. Palmitoylation reduces PPT1 enzymatic activity. Has thioesterase activity against fatty acid thioesters with 14 -18 carbons, including palmitoyl-CoA, S-palmitoyl-N-acetylcysteamine, and palmitoylated proteins. In contrast to PPT2, PPT1 can hydrolyze palmitoylated proteins and palmitoylcysteine. This is Palmitoyl-protein thioesterase 1 (PPT1) from Macaca fascicularis (Crab-eating macaque).